The sequence spans 340 residues: Ephrin-B3 (340 aa).

An N-terminal signal peptide occupies residues 1 to 27; that stretch reads MGAPHFGPGGVQVGALLLLGFAGLVSG. Residues 28 to 167 enclose the Ephrin RBD domain; sequence LSLEPVYWNS…TRGMKVLLRV (140 aa). At 28–227 the chain is on the extracellular side; the sequence is LSLEPVYWNS…GPLPPPSMPA (200 aa). Disulfide bonds link Cys-62–Cys-104 and Cys-92–Cys-156. Residues 168–227 are disordered; the sequence is GQSPRGGAVPRKPVSEMPMERDRGAAHSAEPGRDTIPGDPSSNATSRGAEGPLPPPSMPA. A compositionally biased stretch (basic and acidic residues) spans 185 to 200; sequence PMERDRGAAHSAEPGR. Residue Asn-210 is glycosylated (N-linked (GlcNAc...) asparagine). A helical transmembrane segment spans residues 228–248; it reads VAGAAGGMALLLLGVAGAGGA. Topologically, residues 249–340 are cytoplasmic; sequence MCWRRRRAKP…QSPPNIYYKV (92 aa). Positions 254–300 are disordered; the sequence is RRAKPSESRHPGPGSFGRGGSLGLGGGGGMGPREAEPGELGIALRGG. Residues 267 to 284 show a composition bias toward gly residues; the sequence is GSFGRGGSLGLGGGGGMG. Arg-271 is subject to Omega-N-methylarginine. Ser-274 is subject to Phosphoserine. Residues 338-340 carry the PDZ-binding motif; sequence YKV.

The protein belongs to the ephrin family. Interacts with GRIP1 and GRIP2. As to expression, expressed on lateral floor plate cells, specifically on commissural axon segments that have passed through the floor plate. Expressed in cells of the retinal ganglion cell layer during retinal axon guidance to the optic disk. Expressed in myogenic progenitor cells.

The protein resides in the membrane. Functionally, cell surface transmembrane ligand for Eph receptors, a family of receptor tyrosine kinases which are crucial for migration, repulsion and adhesion during neuronal, vascular and epithelial development. Binds promiscuously Eph receptors residing on adjacent cells, leading to contact-dependent bidirectional signaling into neighboring cells. The signaling pathway downstream of the receptor is referred to as forward signaling while the signaling pathway downstream of the ephrin ligand is referred to as reverse signaling. May play a pivotal role in forebrain function. Binds to, and induce the collapse of, commissural axons/growth cones in vitro. May play a role in constraining the orientation of longitudinally projecting axons. The polypeptide is Ephrin-B3 (Efnb3) (Mus musculus (Mouse)).